Reading from the N-terminus, the 132-residue chain is Small ribosomal subunit protein uS9 (132 aa).

Positions G104–R132 are disordered. Residues K113 to R132 are compositionally biased toward basic residues.

It belongs to the universal ribosomal protein uS9 family.

This chain is Small ribosomal subunit protein uS9, found in Natranaerobius thermophilus (strain ATCC BAA-1301 / DSM 18059 / JW/NM-WN-LF).